A 737-amino-acid chain; its full sequence is Catalase-peroxidase (737 aa).

Residues 1–32 (MSKENMSNEGKCPFNHGAAGTNQSSGRGTSNK) are disordered. Over residues 20–32 (GTNQSSGRGTSNK) the composition is skewed to polar residues. A cross-link (tryptophyl-tyrosyl-methioninium (Trp-Tyr) (with M-252)) is located at residues 103–226 (WHSAGTYRTA…LAAVQMGLIY (124 aa)). His104 serves as the catalytic Proton acceptor. Residues 226-252 (YVNPEGPEGKPDTLASARDIRDTFGRM) constitute a cross-link (tryptophyl-tyrosyl-methioninium (Tyr-Met) (with W-103)). His267 provides a ligand contact to heme b.

The protein belongs to the peroxidase family. Peroxidase/catalase subfamily. In terms of assembly, homodimer or homotetramer. It depends on heme b as a cofactor. Post-translationally, formation of the three residue Trp-Tyr-Met cross-link is important for the catalase, but not the peroxidase activity of the enzyme.

The enzyme catalyses H2O2 + AH2 = A + 2 H2O. It catalyses the reaction 2 H2O2 = O2 + 2 H2O. Its function is as follows. Bifunctional enzyme with both catalase and broad-spectrum peroxidase activity. This is Catalase-peroxidase from Marinomonas sp. (strain MWYL1).